The sequence spans 316 residues: UDP-N-acetylenolpyruvoylglucosamine reductase (316 aa).

The FAD-binding PCMH-type domain occupies V27–K225. R190 is a catalytic residue. S239 (proton donor) is an active-site residue. Residue E309 is part of the active site.

It belongs to the MurB family. The cofactor is FAD.

It localises to the cytoplasm. It carries out the reaction UDP-N-acetyl-alpha-D-muramate + NADP(+) = UDP-N-acetyl-3-O-(1-carboxyvinyl)-alpha-D-glucosamine + NADPH + H(+). The protein operates within cell wall biogenesis; peptidoglycan biosynthesis. Its function is as follows. Cell wall formation. The protein is UDP-N-acetylenolpyruvoylglucosamine reductase of Coxiella burnetii (strain Dugway 5J108-111).